The primary structure comprises 230 residues: Flagellar L-ring protein (230 aa).

The signal sequence occupies residues 1 to 16 (MYLVFGIIFTSVIVTS). The N-palmitoyl cysteine moiety is linked to residue cysteine 17. A lipid anchor (S-diacylglycerol cysteine) is attached at cysteine 17.

Belongs to the FlgH family. The basal body constitutes a major portion of the flagellar organelle and consists of four rings (L,P,S, and M) mounted on a central rod.

It localises to the cell outer membrane. The protein localises to the bacterial flagellum basal body. Functionally, assembles around the rod to form the L-ring and probably protects the motor/basal body from shearing forces during rotation. In Bartonella bacilliformis (strain ATCC 35685 / KC583 / Herrer 020/F12,63), this protein is Flagellar L-ring protein.